Reading from the N-terminus, the 486-residue chain is Probable cytosol aminopeptidase (486 aa).

Belongs to the peptidase M17 family. It depends on Mn(2+) as a cofactor.

The protein localises to the cytoplasm. The enzyme catalyses Release of an N-terminal amino acid, Xaa-|-Yaa-, in which Xaa is preferably Leu, but may be other amino acids including Pro although not Arg or Lys, and Yaa may be Pro. Amino acid amides and methyl esters are also readily hydrolyzed, but rates on arylamides are exceedingly low.. The catalysed reaction is Release of an N-terminal amino acid, preferentially leucine, but not glutamic or aspartic acids.. In terms of biological role, presumably involved in the processing and regular turnover of intracellular proteins. Catalyzes the removal of unsubstituted N-terminal amino acids from various peptides. The protein is Probable cytosol aminopeptidase (pepA) of Synechococcus elongatus (strain ATCC 33912 / PCC 7942 / FACHB-805) (Anacystis nidulans R2).